We begin with the raw amino-acid sequence, 274 residues long: Formamidopyrimidine-DNA glycosylase (274 aa).

P2 acts as the Schiff-base intermediate with DNA in catalysis. The active-site Proton donor is E3. K57 functions as the Proton donor; for beta-elimination activity in the catalytic mechanism. Residues H90, R109, and K150 each coordinate DNA. Residues 235–269 form an FPG-type zinc finger; sequence FVYGRKDKACLICGHTIESIKQGQRSTFFCRHCQH. Catalysis depends on R259, which acts as the Proton donor; for delta-elimination activity.

The protein belongs to the FPG family. In terms of assembly, monomer. The cofactor is Zn(2+).

The catalysed reaction is Hydrolysis of DNA containing ring-opened 7-methylguanine residues, releasing 2,6-diamino-4-hydroxy-5-(N-methyl)formamidopyrimidine.. It carries out the reaction 2'-deoxyribonucleotide-(2'-deoxyribose 5'-phosphate)-2'-deoxyribonucleotide-DNA = a 3'-end 2'-deoxyribonucleotide-(2,3-dehydro-2,3-deoxyribose 5'-phosphate)-DNA + a 5'-end 5'-phospho-2'-deoxyribonucleoside-DNA + H(+). Involved in base excision repair of DNA damaged by oxidation or by mutagenic agents. Acts as a DNA glycosylase that recognizes and removes damaged bases. Has a preference for oxidized purines, such as 7,8-dihydro-8-oxoguanine (8-oxoG). Has AP (apurinic/apyrimidinic) lyase activity and introduces nicks in the DNA strand. Cleaves the DNA backbone by beta-delta elimination to generate a single-strand break at the site of the removed base with both 3'- and 5'-phosphates. In Proteus mirabilis (strain HI4320), this protein is Formamidopyrimidine-DNA glycosylase.